The primary structure comprises 276 residues: Thiazole synthase (276 aa).

Lys112 (schiff-base intermediate with DXP) is an active-site residue. 1-deoxy-D-xylulose 5-phosphate is bound by residues Gly173, Ala199–Gly200, and Asn221–Thr222.

This sequence belongs to the ThiG family. As to quaternary structure, homotetramer. Forms heterodimers with either ThiH or ThiS.

It localises to the cytoplasm. It carries out the reaction [ThiS sulfur-carrier protein]-C-terminal-Gly-aminoethanethioate + 2-iminoacetate + 1-deoxy-D-xylulose 5-phosphate = [ThiS sulfur-carrier protein]-C-terminal Gly-Gly + 2-[(2R,5Z)-2-carboxy-4-methylthiazol-5(2H)-ylidene]ethyl phosphate + 2 H2O + H(+). Its pathway is cofactor biosynthesis; thiamine diphosphate biosynthesis. Its function is as follows. Catalyzes the rearrangement of 1-deoxy-D-xylulose 5-phosphate (DXP) to produce the thiazole phosphate moiety of thiamine. Sulfur is provided by the thiocarboxylate moiety of the carrier protein ThiS. In vitro, sulfur can be provided by H(2)S. The protein is Thiazole synthase of Synechococcus sp. (strain ATCC 27144 / PCC 6301 / SAUG 1402/1) (Anacystis nidulans).